An 81-amino-acid polypeptide reads, in one-letter code: Type III secretion regulatory protein ExsE (81 aa).

The segment at 55 to 81 (DPRSEQALQRLADGDGTPLEARTVRRR) is disordered.

In terms of assembly, interacts with ExsC.

It localises to the cytoplasm. The protein resides in the secreted. Its function is as follows. Acts as a negative regulator of the type III secretion regulon (T3SS) expression. In the absence of inducing signals such as low Ca(2+) or host cell contact, the T3SS/injectisome is expressed at a low basal level and exists in a quiescent state due to ExsA sequestration by ExsD. ExsE binding to ExsC disrupts the complex between ExsC and ExsD, thereby allowing free ExsD to bind ExsA. Upon inducing signal, ExsE is secreted allowing ExsC to bind ExsD. In turn, ExsD cannot bind ExsA and prevent ExsA-mediated transcriptional activation of the type III secretion system. The protein is Type III secretion regulatory protein ExsE (exsE) of Pseudomonas aeruginosa (strain ATCC 15692 / DSM 22644 / CIP 104116 / JCM 14847 / LMG 12228 / 1C / PRS 101 / PAO1).